A 373-amino-acid chain; its full sequence is Ferroptosis suppressor protein 1 (373 aa).

G2 carries N-myristoyl glycine lipidation. The helical transmembrane segment at 7 to 27 (VDTGAVHVVIVGGGFGGIAAA) threads the bilayer. Residues 18 to 22 (GGGFG), R54, and V82 each bind 6-hydroxy-FAD. K168 bears the N6-acetyllysine mark. A 6-hydroxy-FAD-binding site is contributed by D285.

It belongs to the FAD-dependent oxidoreductase family. Interacts with importin subunits KPNA2 and IPO5; this interaction likely mediates the translocation into the nucleus upon oxidative stress. It depends on 6-hydroxy-FAD as a cofactor. Post-translationally, N-myristoylation at Gly-2 mediates the recruitment to lipid droplets and plasma membrane. In terms of processing, acetylation at Lys-168 prevents AIFM2 ubiquitination and degradation, thereby inhibiting ferroptosis. KAT2B mediates acetylation at Lys-168, while HDAC3 removes it. Ubiquitinated. AIFM2 undergoes 'Lys-29'-ubiquitination and proteasomal degradation, which is inhibited by acetylation at Lys-168. In terms of tissue distribution, detected in most normal tissues as two transcripts of 1.8 and 4.0 kb in length, respectively. Highly expressed in liver, testis, and kidney, and expressed at lower levels in pancreas, spleen, brain and lung. Expressed in heart (at protein level).

The protein localises to the lipid droplet. The protein resides in the cell membrane. It localises to the cytoplasm. It is found in the mitochondrion membrane. Its subcellular location is the nucleus. The enzyme catalyses ubiquinone-10 + NADH + H(+) = ubiquinol-10 + NAD(+). The catalysed reaction is phylloquinone + NADH + H(+) = phylloquinol + NAD(+). It carries out the reaction menaquinone-4 + NADH + H(+) = menaquinol-4 + NAD(+). It catalyses the reaction menadione + NADH + H(+) = menadiol + NAD(+). With respect to regulation, the modification by 4-hydroxy-2-nonenal (HNE) adduction in mitochondria results in loss of the oxidoreductase activity and activation of a novel function in mitochondrial oxidative stress signaling. Functionally, a NAD(P)H-dependent oxidoreductase that acts as a key inhibitor of ferroptosis. At the plasma membrane, catalyzes reduction of coenzyme Q/ubiquinone-10 to ubiquinol-10, a lipophilic radical-trapping antioxidant that prevents lipid oxidative damage and consequently ferroptosis. Acts in parallel to GPX4 to suppress phospholipid peroxidation and ferroptosis. This anti-ferroptotic function is independent of cellular glutathione levels. Also acts as a potent radical-trapping antioxidant by mediating warfarin-resistant vitamin K reduction in the canonical vitamin K cycle: catalyzes NAD(P)H-dependent reduction of vitamin K (phylloquinone, menaquinone-4 and menadione) to hydroquinone forms. Hydroquinones act as potent radical-trapping antioxidants inhibitor of phospholipid peroxidation and ferroptosis. May play a role in mitochondrial stress signaling. Upon oxidative stress, associates with the lipid peroxidation end product 4-hydroxy-2-nonenal (HNE) forming a lipid adduct devoid of oxidoreductase activity, which then translocates from mitochondria into the nucleus triggering DNA damage and cell death. This chain is Ferroptosis suppressor protein 1, found in Mus musculus (Mouse).